Reading from the N-terminus, the 382-residue chain is Lipid-A-disaccharide synthase (382 aa).

This sequence belongs to the LpxB family.

It catalyses the reaction 2-N,3-O-bis[(3R)-3-hydroxytetradecanoyl]-alpha-D-glucosaminyl 1-phosphate + UDP-2-N,3-O-bis[(3R)-3-hydroxytetradecanoyl]-alpha-D-glucosamine = lipid A disaccharide (E. coli) + UDP + H(+). The enzyme catalyses a lipid X + a UDP-2-N,3-O-bis[(3R)-3-hydroxyacyl]-alpha-D-glucosamine = a lipid A disaccharide + UDP + H(+). It functions in the pathway glycolipid biosynthesis; lipid IV(A) biosynthesis; lipid IV(A) from (3R)-3-hydroxytetradecanoyl-[acyl-carrier-protein] and UDP-N-acetyl-alpha-D-glucosamine: step 5/6. Condensation of UDP-2,3-diacylglucosamine and 2,3-diacylglucosamine-1-phosphate to form lipid A disaccharide, a precursor of lipid A, a phosphorylated glycolipid that anchors the lipopolysaccharide to the outer membrane of the cell. This chain is Lipid-A-disaccharide synthase, found in Shigella flexneri serotype 5b (strain 8401).